A 501-amino-acid polypeptide reads, in one-letter code: Cytochrome P450 monooxygenase janQ (501 aa).

A helical transmembrane segment spans residues 1–16; the sequence is MVLGLLAFIWLMRAWR. N-linked (GlcNAc...) asparagine glycosylation is present at N132. C439 contributes to the heme binding site.

Belongs to the cytochrome P450 family. Requires heme as cofactor.

The protein resides in the membrane. Its pathway is secondary metabolite biosynthesis. Functionally, cytochrome P450 monooxygenase; part of the gene cluster that mediates the biosynthesis of the indole diterpenes janthitremanes such as shearinine K or shearinine A. The geranylgeranyl diphosphate (GGPP) synthase janG catalyzes the first step in janthitremane biosynthesis via conversion of farnesyl pyrophosphate and isopentyl pyrophosphate into geranylgeranyl pyrophosphate (GGPP). Condensation of indole-3-glycerol phosphate with GGPP by the prenyl transferase janC then forms 3-geranylgeranylindole (3-GGI). Epoxidation by the FAD-dependent monooxygenase janM leads to a epoxidized-GGI that is substrate of the terpene cyclase janB for cyclization to yield paspaline. Paspaline is subsequently converted to 13-desoxypaspaline by the cytochrome P450 monooxygenase janP, via beta-PC-M6 in a series of alpha-face oxidations. The cytochrome P450 monooxygenase janQ is proposed to carry out sequential beta-face oxidation steps at C-7 and C-13 of 13-desoxypaspaline to form paspalicine and paspalinine respectively. The indole diterpene prenyltransferase janD may then convert paspalinine into shearinine K which is substrate of janO and/or additional enzymes for oxidation and cyclization to generate shearinine A. In Penicillium janthinellum (Penicillium vitale), this protein is Cytochrome P450 monooxygenase janQ.